Reading from the N-terminus, the 778-residue chain is Probable glutamine--tRNA ligase (778 aa).

The segment covering leucine 188–alanine 205 has biased composition (basic and acidic residues). Residues leucine 188 to aspartate 219 are disordered. Positions proline 273–histidine 283 match the 'HIGH' region motif. Residues glutamate 274–asparagine 276 and histidine 280–alanine 286 each bind ATP. L-glutamine is bound by residues aspartate 306 and tyrosine 441. ATP contacts are provided by residues threonine 460, arginine 489–leucine 490, and valine 497–lysine 499. The short motif at leucine 496–arginine 500 is the 'KMSKS' region element.

The protein belongs to the class-I aminoacyl-tRNA synthetase family.

It carries out the reaction tRNA(Gln) + L-glutamine + ATP = L-glutaminyl-tRNA(Gln) + AMP + diphosphate. The polypeptide is Probable glutamine--tRNA ligase (Drosophila melanogaster (Fruit fly)).